Reading from the N-terminus, the 96-residue chain is Evasin P1078 (96 aa).

The N-terminal stretch at 1 to 28 (MAFNTITFLQWAVFVAILFNMNLHSASA) is a signal peptide. Disulfide bonds link C48/C67, C52/C69, and C63/C80. The N-linked (GlcNAc...) asparagine glycan is linked to N51. N-linked (GlcNAc...) asparagine glycosylation occurs at N74.

The protein localises to the secreted. Functionally, salivary chemokine-binding protein which binds to host chemokines CXCL1, CXCL2, CXCL3, CXCL5, CXCL6, CXCL11 and CXCL13. This Ixodes ricinus (Common tick) protein is Evasin P1078.